A 460-amino-acid polypeptide reads, in one-letter code: MRVYIFLCLMCWVRSDNKRPCLEFSQLSVKDSFRDLFIPRIETILMMYTRNNLNCAEPLFEQNNSLNVNFNTQKKTVWLIHGYRPVGSIPLWLQNFVRILLNEEDMNVIVVDWSRGATTFIYNRAVKNTRKVAVSLSVHIKNLLKHGASLDNFHFIGVSLGAHISGFVGKIFHGQLGRITGLDPAGPRFSRKPPYSRLDYTDAKFVDVIHSDSNGLGIQEPLGHIDFYPNGGNKQPGCPKSIFSGIQFIKCNHQRAVHLFMASLETNCNFISFPCRSYKDYKTSLCVDCDCFKEKSCPRLGYQAKLFKGVLKERMEGRPLRTTVFLDTSGTYPFCTYYFVLSIIVPDKTMMDGSFSFKLLNQLGMIEEPRLYEKNKPFYKLQEVKILAQFYNDFVNISSIGLTYFQSSNLQCSTCTYKIQSLMLKSLTYPERPPLCRYNIVLKDREEVFLNPNTCTPKNT.

A signal peptide spans 1-15; sequence MRVYIFLCLMCWVRS. Asparagine 63 carries N-linked (GlcNAc...) asparagine glycosylation. Serine 159 functions as the Nucleophile in the catalytic mechanism. The active-site Charge relay system is the aspartate 183. A disulfide bridge links cysteine 238 with cysteine 251. Histidine 253 serves as the catalytic Charge relay system. Intrachain disulfides connect cysteine 275-cysteine 286 and cysteine 289-cysteine 297. Asparagine 396 carries N-linked (GlcNAc...) asparagine glycosylation. The cysteines at positions 436 and 455 are disulfide-linked.

Belongs to the AB hydrolase superfamily. Lipase family. As to quaternary structure, interacts with heparin with a high affinity. In terms of tissue distribution, expressed in testis. Expressed exclusively at the connecting piece of the sperm.

Its subcellular location is the cell membrane. It is found in the secreted. It carries out the reaction 1-hexadecanoyl-2-(9Z-octadecenoyl)-sn-glycero-3-phosphate + H2O = 2-(9Z-octadecenoyl)-sn-glycero-3-phosphate + hexadecanoate + H(+). With respect to regulation, inhibited by sodium vanadate. Functionally, hydrolyzes specifically phosphatidic acid (PA) to produce 2-acyl lysophosphatidic acid (LPA; a potent bioactive lipid mediator) and fatty acid. Does not hydrolyze other phospholipids, like phosphatidylserine (PS), phosphatidylcholine (PC) and phosphatidylethanolamine (PE) or triacylglycerol (TG). The chain is Lipase member I (LIPI) from Homo sapiens (Human).